We begin with the raw amino-acid sequence, 194 residues long: Orotate phosphoribosyltransferase (194 aa).

Residue 114-122 (EDVVTTGKS) participates in 5-phospho-alpha-D-ribose 1-diphosphate binding. 2 residues coordinate orotate: T118 and R146.

It belongs to the purine/pyrimidine phosphoribosyltransferase family. PyrE subfamily. In terms of assembly, homodimer. Mg(2+) is required as a cofactor.

It carries out the reaction orotidine 5'-phosphate + diphosphate = orotate + 5-phospho-alpha-D-ribose 1-diphosphate. It participates in pyrimidine metabolism; UMP biosynthesis via de novo pathway; UMP from orotate: step 1/2. Functionally, catalyzes the transfer of a ribosyl phosphate group from 5-phosphoribose 1-diphosphate to orotate, leading to the formation of orotidine monophosphate (OMP). The sequence is that of Orotate phosphoribosyltransferase from Clostridioides difficile (strain 630) (Peptoclostridium difficile).